The following is a 141-amino-acid chain: Large ribosomal subunit protein uL11 (141 aa).

It belongs to the universal ribosomal protein uL11 family. As to quaternary structure, part of the ribosomal stalk of the 50S ribosomal subunit. Interacts with L10 and the large rRNA to form the base of the stalk. L10 forms an elongated spine to which L12 dimers bind in a sequential fashion forming a multimeric L10(L12)X complex. In terms of processing, one or more lysine residues are methylated.

In terms of biological role, forms part of the ribosomal stalk which helps the ribosome interact with GTP-bound translation factors. The sequence is that of Large ribosomal subunit protein uL11 from Synechococcus sp. (strain JA-3-3Ab) (Cyanobacteria bacterium Yellowstone A-Prime).